Here is a 268-residue protein sequence, read N- to C-terminus: Mesoderm posterior protein 1 (268 aa).

A disordered region spans residues 17 to 93 (AAWGPTRRPP…RQSASEREKL (77 aa)). Positions 36–48 (LVSSPDSWGSTPA) are enriched in polar residues. The segment covering 66 to 86 (APSVGRRGARSSRLGSGQRQS) has biased composition (low complexity). A bHLH domain is found at 82–136 (GQRQSASEREKLRMRTLARALHELRRFLPPSVAPAGQSLTKIETLRLAIRYIGHL). The CPLCP signature appears at 163-167 (CPLCP). A run of 2 repeats spans residues 182–183 (GQ) and 184–185 (GQ). Residues 182-185 (GQGQ) are 2 X 2 AA tandem repeats of G-Q.

It is found in the nucleus. Transcription factor. Plays a role in the epithelialization of somitic mesoderm and in the development of cardiac mesoderm. Defines the rostrocaudal patterning of the somites by participating in distinct Notch pathways. In Homo sapiens (Human), this protein is Mesoderm posterior protein 1 (MESP1).